The sequence spans 372 residues: N-methyl-L-tryptophan oxidase (372 aa).

An FAD-binding site is contributed by 4-34; the sequence is DLIIIGSGSVGAAAGYYATRAGLNVLMTDAH. S-8alpha-FAD cysteine is present on cysteine 308.

The protein belongs to the MSOX/MTOX family. MTOX subfamily. In terms of assembly, monomer. The cofactor is FAD.

The enzyme catalyses N(alpha)-methyl-L-tryptophan + O2 + H2O = L-tryptophan + formaldehyde + H2O2. Its function is as follows. Catalyzes the oxidative demethylation of N-methyl-L-tryptophan. The polypeptide is N-methyl-L-tryptophan oxidase (Escherichia coli O139:H28 (strain E24377A / ETEC)).